Here is a 216-residue protein sequence, read N- to C-terminus: Ceramide-1-phosphate transfer protein (216 aa).

Asp56, Lys60, Arg108, Arg112, and His152 together coordinate an N-acylsphingoid base 1-phosphate.

This sequence belongs to the GLTP family.

It localises to the cytoplasm. It is found in the cytosol. The protein resides in the golgi apparatus. Its subcellular location is the trans-Golgi network membrane. The protein localises to the cell membrane. It localises to the endosome membrane. It is found in the nucleus outer membrane. The enzyme catalyses N-(hexadecanoyl)-sphing-4-enine-1-phosphate(in) = N-(hexadecanoyl)-sphing-4-enine-1-phosphate(out). The catalysed reaction is N-(9Z-octadecenoyl)-sphing-4-enine-1-phosphate(in) = N-(9Z-octadecenoyl)-sphing-4-enine-1-phosphate(out). Functionally, mediates the intracellular transfer of ceramide-1-phosphate (C1P) between organelle membranes and the cell membrane. Required for normal structure of the Golgi stacks. Can bind phosphoceramides with a variety of aliphatic chains, but has a preference for lipids with saturated C16:0 or monounsaturated C18:1 aliphatic chains, and is inefficient with phosphoceramides containing lignoceryl (C24:0). Plays a role in the regulation of the cellular levels of ceramide-1-phosphate, and thereby contributes to the regulation of phospholipase PLA2G4A activity and the release of arachidonic acid. Has no activity with galactosylceramide, lactosylceramide, sphingomyelin, phosphatidylcholine, phosphatidic acid and ceramide. C1P transfer is stimulated by phosphatidylserine in C1P source vesicles. Regulates autophagy, inflammasome mediated IL1B and IL18 processing, and pyroptosis, but not apoptosis. In Mus musculus (Mouse), this protein is Ceramide-1-phosphate transfer protein.